The sequence spans 164 residues: MKITELLSPENIRQGVSFSSKKRLFESIAHFVEEQILAEKGEQACFECLFEREKLGNSGLGNGIAMPKAKIPVTVSDKAIAVFMQLDNPIDYDAFDGKPVDLIFALLIPENQCETYIPVLASLIEKLTDKNVLKQLRSAKSADEIWQVFEITDQSETTFEEVKE.

The 148-residue stretch at 5–152 (ELLSPENIRQ…DEIWQVFEIT (148 aa)) folds into the PTS EIIA type-2 domain.

Functionally, not known; lacks the phosphorylation site found in other PtsN proteins. In Haemophilus influenzae (strain ATCC 51907 / DSM 11121 / KW20 / Rd), this protein is Nitrogen regulatory protein homolog (ptsN).